A 346-amino-acid chain; its full sequence is uncharacterized protein (346 aa).

The segment at 322–346 (GRDGGYRETTSPPTGRGRNVRGSHA) is disordered.

This is an uncharacterized protein from Mycobacterium tuberculosis (strain CDC 1551 / Oshkosh).